We begin with the raw amino-acid sequence, 244 residues long: DNA repair protein RecO (244 aa).

This sequence belongs to the RecO family.

Functionally, involved in DNA repair and RecF pathway recombination. The sequence is that of DNA repair protein RecO from Nocardioides sp. (strain ATCC BAA-499 / JS614).